A 707-amino-acid polypeptide reads, in one-letter code: Golgin candidate 1 (707 aa).

Residues 1 to 664 are Cytoplasmic-facing; the sequence is MASWLKAAED…RATRFLWRYP (664 aa). Disordered regions lie at residues 22–106, 121–196, and 234–256; these read VVED…EIHP, VADT…SKRD, and QEPK…ADTT. Positions 38-47 are enriched in low complexity; that stretch reads SGRKGSQGKR. Residues 56–67 show a composition bias toward basic and acidic residues; it reads VKEESSNKRDSS. Over residues 68–80 the composition is skewed to polar residues; that stretch reads GDQSGPGVSQSEV. Low complexity predominate over residues 83–95; the sequence is SKSSVSTDETSSS. 3 stretches are compositionally biased toward basic and acidic residues: residues 139-150, 185-196, and 245-254; these read DGDRSESKHADG, TQRELDDSSKRD, and LKREQDRRAD. 2 coiled-coil regions span residues 287–424 and 452–608; these read RVCA…NATK and ADER…KSRV. Residues 665–685 traverse the membrane as a helical; Signal-anchor for type II membrane protein segment; that stretch reads IARMFLLFYLVFVHLFLMYLI. Residues 686–707 lie on the Lumenal side of the membrane; it reads HRLQEQAEAQEVAAMTNNVFRL.

Its subcellular location is the golgi apparatus membrane. Golgi matrix protein playing a role in tethering of vesicles to Golgi membranes and in maintaining the overall structure of the Golgi apparatus. This chain is Golgin candidate 1 (GC1), found in Arabidopsis thaliana (Mouse-ear cress).